Here is a 340-residue protein sequence, read N- to C-terminus: MAQLGAVVAVASSFFCASLFSAVHKIEEGHIGVYYRGGALLTSTSGPGFHLMLPFITSYKSVQTTLQTDEVKNVPCGTSGGVMIYFDRIEVVNFLVPNAVYDIVKNYTADYDKALIFNKIHHELNQFCSVHTLQEVYIELFDQIDENLKLALQQDLTSMAPGLVIQAVRVTKPNIPEAIRRNYELMESEKTKLLIAAQKQKVVEKEAETERKKALIEAEKVAQVAEITYGQKVMEKETEKKISEIEDAAFLAREKAKADAECYTALKIAEANKLKLTPEYLQLMKYKAIASNSKIYFGKDIPNMFMDSAGGLGKQFEGLSDDKLGFGLEDEPLEAPTKEN.

The Cytoplasmic portion of the chain corresponds to 1-3 (MAQ). The chain crosses the membrane as a helical span at residues 4 to 24 (LGAVVAVASSFFCASLFSAVH). The Lumenal segment spans residues 25–340 (KIEEGHIGVY…EPLEAPTKEN (316 aa)). A glycan (N-linked (GlcNAc...) asparagine) is linked at Asn-106. The tract at residues 177 to 309 (EAIRRNYELM…DIPNMFMDSA (133 aa)) is interaction with ERLIN1. Residue Lys-267 is modified to N6-acetyllysine.

The protein belongs to the band 7/mec-2 family. In terms of assembly, forms a heteromeric complex with ERLIN1. In complex with ERLIN1, interacts with RNF170. Interacts with activated ITPR1, independently of the degree of ITPR1 polyubiquitination. Interacts with SCAP, INSIG1, SREBF1 and SREBF2 under cholesterol sufficiency conditions; indicative for an association with the SCAP-SREBP-INSIG complex. Probably part of an AMFR/gp78 and INSIG1-containing ubiquitin ligase complex involved in ERAD of HMGCR. Interacts with TMUB1; TMUB1 bridges the association with AMFR. Interacts with SYVN1 and RNF139. Interacts with TMEM259. Interacts with TMEM41B. Deubiquitinated by USP25; leading to stabilization.

The protein localises to the endoplasmic reticulum membrane. Functionally, component of the ERLIN1/ERLIN2 complex which mediates the endoplasmic reticulum-associated degradation (ERAD) of inositol 1,4,5-trisphosphate receptors (IP3Rs) such as ITPR1. Promotes sterol-accelerated ERAD of HMGCR probably implicating an AMFR/gp78-containing ubiquitin ligase complex. Involved in regulation of cellular cholesterol homeostasis by regulation the SREBP signaling pathway. May promote ER retention of the SCAP-SREBF complex. The polypeptide is Erlin-2 (Erlin2) (Mus musculus (Mouse)).